Reading from the N-terminus, the 156-residue chain is Small ribosomal subunit protein uS7 (156 aa).

Belongs to the universal ribosomal protein uS7 family. In terms of assembly, part of the 30S ribosomal subunit. Contacts proteins S9 and S11.

Functionally, one of the primary rRNA binding proteins, it binds directly to 16S rRNA where it nucleates assembly of the head domain of the 30S subunit. Is located at the subunit interface close to the decoding center, probably blocks exit of the E-site tRNA. This is Small ribosomal subunit protein uS7 from Metamycoplasma arthritidis (strain 158L3-1) (Mycoplasma arthritidis).